Reading from the N-terminus, the 692-residue chain is Glycine--tRNA ligase beta subunit (692 aa).

The protein belongs to the class-II aminoacyl-tRNA synthetase family. In terms of assembly, tetramer of two alpha and two beta subunits.

Its subcellular location is the cytoplasm. It catalyses the reaction tRNA(Gly) + glycine + ATP = glycyl-tRNA(Gly) + AMP + diphosphate. The sequence is that of Glycine--tRNA ligase beta subunit from Limosilactobacillus fermentum (strain NBRC 3956 / LMG 18251) (Lactobacillus fermentum).